The chain runs to 227 residues: NADH-quinone oxidoreductase subunit C (227 aa).

This sequence belongs to the complex I 30 kDa subunit family. As to quaternary structure, NDH-1 is composed of 14 different subunits. Subunits NuoB, C, D, E, F, and G constitute the peripheral sector of the complex.

Its subcellular location is the cell inner membrane. It carries out the reaction a quinone + NADH + 5 H(+)(in) = a quinol + NAD(+) + 4 H(+)(out). Functionally, NDH-1 shuttles electrons from NADH, via FMN and iron-sulfur (Fe-S) centers, to quinones in the respiratory chain. The immediate electron acceptor for the enzyme in this species is believed to be ubiquinone. Couples the redox reaction to proton translocation (for every two electrons transferred, four hydrogen ions are translocated across the cytoplasmic membrane), and thus conserves the redox energy in a proton gradient. This Coxiella burnetii (strain Dugway 5J108-111) protein is NADH-quinone oxidoreductase subunit C.